Consider the following 453-residue polypeptide: Growth/differentiation factor 9 (453 aa).

A signal peptide spans 1–27; the sequence is MALPNKFFLWFCCFAWLCFPISLDSLP. Positions 28-318 are excised as a propeptide; that stretch reads SRGEAQIVAR…EGVRSSRHRR (291 aa). N-linked (GlcNAc...) asparagine glycans are attached at residues asparagine 163, asparagine 236, asparagine 255, and asparagine 269. Residues 304 to 328 form a disordered region; that stretch reads GEEAAEGVRSSRHRRDQESASSELK. The segment covering 318-328 has biased composition (basic and acidic residues); it reads RDQESASSELK. Asparagine 337 is a glycosylation site (N-linked (GlcNAc...) asparagine). 3 disulfide bridges follow: cysteine 352/cysteine 418, cysteine 381/cysteine 450, and cysteine 385/cysteine 452.

It belongs to the TGF-beta family. As to quaternary structure, homodimer or heterodimer (Potential). But, in contrast to other members of this family, cannot be disulfide-linked. Phosphorylated; phosphorylation is critical for GDF9 function.

Its subcellular location is the secreted. In terms of biological role, required for ovarian folliculogenesis. The sequence is that of Growth/differentiation factor 9 (GDF9) from Ovis aries (Sheep).